Reading from the N-terminus, the 432-residue chain is Luc7-like protein 3 (432 aa).

Met1 bears the N-acetylmethionine mark. A phosphoserine mark is found at Ser3, Ser110, and Ser115. Positions 124–181 (KNEEKIQVLTDKIDVLLQQIEELGSEGKVEEAQGMMKLVEQLKEERELLRSTTSTIES) form a coiled coil. Residue Lys231 is modified to N6-acetyllysine. A compositionally biased stretch (basic and acidic residues) spans 234 to 287 (LRKRTEEPDRDERLKKEKQEREEREKEREREREERERKRRREEEEREKERARDR). Residues 234–432 (LRKRTEEPDR…IKSEGDTQSN (199 aa)) form a disordered region. The span at 288 to 301 (ERRKRSRSRSRHSS) shows a compositional bias: basic residues. Basic and acidic residues predominate over residues 302-311 (RTSDRRCSRS). Over residues 312–367 (RDHKRSRSRERRRSRSRDRRRSRSHDRSERKHRSRSRDRRRSKSRDRKSYKHRSKS) the composition is skewed to basic residues. Positions 368–414 (RDREQDRKSKEKEKRGSDDKKSSVKSSSREKQSEDTNTESKESDTKN) are enriched in basic and acidic residues. Position 420 is a phosphoserine (Ser420). Over residues 421–432 (EDIKSEGDTQSN) the composition is skewed to basic and acidic residues. Lys424 participates in a covalent cross-link: Glycyl lysine isopeptide (Lys-Gly) (interchain with G-Cter in SUMO1); alternate. Lys424 is covalently cross-linked (Glycyl lysine isopeptide (Lys-Gly) (interchain with G-Cter in SUMO2); alternate). Phosphoserine occurs at positions 425 and 431.

Belongs to the Luc7 family. As to quaternary structure, may interact with SFRS1 and form homodimers. Interacts with JMJD6. Interacts with RBM25. Interacts with RSRC1 (via Arg/Ser-rich domain). Interacts with RRP1B.

The protein resides in the nucleus speckle. Its function is as follows. Binds cAMP regulatory element DNA sequence. May play a role in RNA splicing. The polypeptide is Luc7-like protein 3 (LUC7L3) (Bos taurus (Bovine)).